The chain runs to 2034 residues: MGSQVLQILRQGVWASLTGGWFFDPHQSTFSNCFHLYVWIFLLIFPFLLYMVLPPSLMVAGVYCLVVAVIFATIKTVNYRLHAMFDQGEIVEKRSSTMGELEEEPAQGDSNPPRDPGVEMTVFRKVSSTPPVRCSSQHSVFGFNQVSELLPRMEDSGPLRDIKELVREQGSNNVIVTSADREMLKLSSQEKLIGDLPQTPPGAVPDPSLASTDSSEPSPLAGDGAPWSGSSMADTPMSPLLKGSLSQELSKSFLTLTQPDRALVRTSSRREQRRGAGGYQPLDRRGSGEPTPQKAGSSDSCFSGTDRETLSSFKSEKTNSTHLDSPPGGPAPEGSDTDPPSEAELPASPDAGVPSDDTLRSFDTVIGAGTPPGLAEPLLVVRPKDLALLRPSKRQPPLRRHSPPGRAPRRPLLEGGGFFEDEDTSEGSELSPASSLRSQRRYSTDSSSSTSCYSPESSRGAAGGPRKRRAPHGAEEGTAVPPKRPYGTQRTPSTASAKTHARVLSMDGAGGDVLRPPLAGCKAELEAQVGVEQAASEPVVLPAEARRGPAANQPGWRGELQEEGAVGGAAEETGRRDRSSSVRRTQAIRRRHNAGSNPTPPASVMGSPPSSLQEAQRGRAASHSRALTLPSALHFASSLLLTRAGANVHEACTFDDTSEGAVHYFYDESGVRRSYTFGLAGGGYENPVGQQGEQTANGAWDRHSHSSSFHSADVPEATGGLNLLQPRPVVLQGMQVRRVPLEIPEEQTLMEEAPPRAQHSYKYWLLPGRWTSVRYERLALLALLDRTRGVLENIFGVGLSSLVAFLGYLLLLKGFFTDIWVFQFCLVIASCQYSLLKSVQPDAASPMHGHNWVIAYSRPVYFCICCLLIWLLDALGSAQPFPPVSLYGLTLFSASFFFCARDVATVFTLCFPFVFLLGLLPQVNTCLMYLLEQIDMHGFGGTAATSPLTAVFSLSRSLLAAALLYGFCLGAIKTPWPEQHVPVLFSVFCGLLVALSYHLSRQSSDPTVLWSLIRSKLFPELEERSLETARAEPPDPLPDKMRQSVREVLHSDLVMCVVIAVLTFAISASTVFIALKSVLGFVLYALAGAVGFFTHYLLPQLRKQLPWFCLSQPVLKPLEYSQYEVRGAAQVMWFEKLYAGLQCVEKYLIYPAVVLNALTVDAHTVVSHPDKYCFYCRALLMTVAGLKLLRSAFCCPPQQYLTLAFTVLLFHFDYPRLSQGFLLDYFLMSLLCSKLWDLLYKLRFVLTYIAPWQITWGSAFHAFAQPFAVPHSAMLFVQALLSGLFSTPLNPLLGSAVFIMSYARPLKFWERDYNTKRVDHSNTRLVTQLDRNPGADDNNLNSIFYEHLTRSLQHTLCGDLVLGRWGNYGPGDCFVLASDYLNALVHLIEVGNGLVTFQLRGLEFRGTYCQQREVEAITEGVEEDEGCCCCEPGHLPRVLSFNAAFGQRWLAWEVTASKYVLEGYSISDNNAASMLQVFDLRKILITYYVKSIIYYVSRSPKLEVWLSHEGITAALRPVRVPGYADSDPTFSLSVDEDYDLRLSGLSLPSFCAVHLEWIQYCASRRSQPVDQDWNSPLVTLCFGLCVLGRRALGTASHSMSASLEPFLYGLHALFKGDFRITSPRDEWVFADMDLLHRVVAPGVRMALKLHQDHFTSPDEYEEPAALYDAIAANEERLVISHEGDPAWRSAILSNTPSLLALRHVLDDASDEYKIIMLNRRHLSFRVIKVNRECVRGLWAGQQQELVFLRNRNPERGSIQNAKQALRNMINSSCDQPLGYPIYVSPLTTSLAGSHPQLRALWGGPISLGAIAHWLLRTWERLHKGCGAGCNSGGNVDDSDCSGGGGLTSLSNNPPVAHPTPENTAGNGDQPLPPGPGWGPRSSLSGSGDGRPPPLLQWPPPRLPGPPPASPIPTEGPRTSRPPGPGLLSSEGPSGKWSLGGRKGLGGSDGEPASGSPKGGTPKSQAPLDLSLSLSLSLSPDVSTEASPPRASQDIPCLDSSAPESGTPMGALGDWPAPIEERESPAAQPLLEHQY.

2 helical membrane-spanning segments follow: residues 33 to 53 and 54 to 74; these read CFHL…YMVL and PPSL…FATI. The segment at 96-118 is disordered; sequence STMGELEEEPAQGDSNPPRDPGV. Phosphoserine is present on Ser-127. Phosphothreonine is present on Thr-129. 3 disordered regions span residues 193 to 242, 260 to 517, and 540 to 625; these read IGDL…PLLK, DRAL…LRPP, and VLPA…SHSR. Over residues 294 to 303 the composition is skewed to polar residues; it reads KAGSSDSCFS. The span at 305-319 shows a compositional bias: basic and acidic residues; that stretch reads TDRETLSSFKSEKTN. Asn-319 carries an N-linked (GlcNAc...) asparagine glycan. Thr-370 carries the phosphothreonine modification. The span at 391-409 shows a compositional bias: basic residues; sequence PSKRQPPLRRHSPPGRAPR. Ser-392 and Ser-431 each carry phosphoserine. Polar residues predominate over residues 427–436; sequence GSELSPASSL. Positions 444–460 are enriched in low complexity; sequence TDSSSSTSCYSPESSRG. Residues 488-497 are compositionally biased toward polar residues; it reads TQRTPSTASA. A Phosphoserine modification is found at Ser-505. Transmembrane regions (helical) follow at residues 790 to 812, 819 to 836, 852 to 872, 880 to 900, 903 to 923, 946 to 968, and 980 to 1000; these read VLEN…LLLL, IWVF…YSLL, WVIA…IWLL, PFPP…FFCA, VATV…LPQV, SPLT…YGFC, and HVPV…YHLS. A Phosphoserine modification is found at Ser-1025. 4 helical membrane passes run 1053-1073, 1078-1098, 1244-1264, and 1280-1300; these read LVMC…TVFI, VLGF…HYLL, FVLT…HAFA, and LLSG…VFIM. Ser-1697 is modified (phosphoserine). Residue Asn-1770 is glycosylated (N-linked (GlcNAc...) asparagine). Residues 1844-2034 are disordered; that stretch reads GGLTSLSNNP…AAQPLLEHQY (191 aa). Positions 1890–1910 are enriched in pro residues; the sequence is RPPPLLQWPPPRLPGPPPASP. Position 1909 is a phosphoserine (Ser-1909). Over residues 1925–1939 the composition is skewed to low complexity; it reads GLLSSEGPSGKWSLG. Ser-1955 carries the phosphoserine modification. The span at 1969–1978 shows a compositional bias: low complexity; the sequence is LSLSLSLSLS.

The protein belongs to the pecanex family.

It is found in the membrane. The chain is Pecanex-like protein 3 from Homo sapiens (Human).